We begin with the raw amino-acid sequence, 566 residues long: Proline--tRNA ligase (566 aa).

It belongs to the class-II aminoacyl-tRNA synthetase family. ProS type 1 subfamily. As to quaternary structure, homodimer.

It is found in the cytoplasm. It carries out the reaction tRNA(Pro) + L-proline + ATP = L-prolyl-tRNA(Pro) + AMP + diphosphate. Its function is as follows. Catalyzes the attachment of proline to tRNA(Pro) in a two-step reaction: proline is first activated by ATP to form Pro-AMP and then transferred to the acceptor end of tRNA(Pro). As ProRS can inadvertently accommodate and process non-cognate amino acids such as alanine and cysteine, to avoid such errors it has two additional distinct editing activities against alanine. One activity is designated as 'pretransfer' editing and involves the tRNA(Pro)-independent hydrolysis of activated Ala-AMP. The other activity is designated 'posttransfer' editing and involves deacylation of mischarged Ala-tRNA(Pro). The misacylated Cys-tRNA(Pro) is not edited by ProRS. In Bacillus anthracis (strain A0248), this protein is Proline--tRNA ligase.